The sequence spans 305 residues: THAP domain-containing protein 11 (305 aa).

Residues 1 to 80 (MPGFTCCVPG…TYTVRVPTIF (80 aa)) form a THAP-type zinc finger. The tract at residues 85–135 (VNERKVARRPAGAAAARRRQQQQQQQQQQQQQQQLQQQQPSPSSSTAQTTQ) is disordered. Over residues 105–135 (QQQQQQQQQQQQQQLQQQQPSPSSSTAQTTQ) the composition is skewed to low complexity. The HCFC1-binding motif (HBM) signature appears at 234–237 (DHSY). Residues 246 to 296 (EELLRKLNEQRDILALMEVKMKEMKGSIRHLRLTEAKLREELREKDRLLAM) adopt a coiled-coil conformation.

Belongs to the THAP11 family. Forms homodimers. Interacts via HBM with HCFC1. Forms a complex with HCFC1 and ZNF143. In terms of tissue distribution, mainly expressed in embryonic pluripotent cells. In adult tissues, expressed in oocytes and in certain regions of the brain,including hippocampus, olfactory bulb and Purkinje cells.

Its subcellular location is the nucleus. The protein localises to the cytoplasm. Its function is as follows. Transcriptional repressor that plays a central role for embryogenesis and the pluripotency of embryonic stem (ES) cells. Sequence-specific DNA-binding factor that represses gene expression in pluripotent ES cells by directly binding to key genetic loci and recruiting epigenetic modifiers. Required for normal brain development and neural precursor differentiation. Transcription factor, which has both transcriptional activation and repression activities. Also modulates chromatin accessibility. In complex with HCFC1 and ZNF143, regulates the expression of several genes, including AP2S1, ESCO2, OPHN1, RBL1, UBXN8 and ZNF32. May regulate the expression of genes that encode both cytoplasmic and mitochondrial ribosomal proteins. Required for normal mitochondrial development and function. Regulates mitochondrial gene expression, including that of components of the electron transport chain. Involved in the maintainance of pluripotency in early embryonic cells, possibly through its action on mitochondrial maturation which is required to meet high energy demands of these cells. Required for early development of retina, preventing premature exit of retinal progenitor cells from the cell cycle. This effect may also be mediated by its action on mitochondria. Through the regulation of MMACHC gene expression, controls cobalamin metabolism. Required for normal brain development and neural precursor differentiation. Involved in cell growth. In Mus musculus (Mouse), this protein is THAP domain-containing protein 11 (Thap11).